The sequence spans 562 residues: DNA-binding protein MutS2 (562 aa).

Residue 380 to 387 (GANSGGKT) coordinates ATP.

Belongs to the DNA mismatch repair MutS family. Archaeal Muts2 subfamily. As to quaternary structure, multimer. Co(2+) is required as a cofactor. The cofactor is Mn(2+).

Functionally, has ATPase and non-specific DNA-binding activities. May be involved in recombination and/or recombinational repair. Not involved in mismatch repair. The protein is DNA-binding protein MutS2 of Pyrococcus furiosus (strain ATCC 43587 / DSM 3638 / JCM 8422 / Vc1).